Reading from the N-terminus, the 165-residue chain is Small ribosomal subunit protein eS10 (165 aa).

The interval 92-165 is disordered; sequence ATLRRSRPET…FGRGRGQAPQ (74 aa). Positions 97–128 are enriched in basic and acidic residues; sequence SRPETGRPRPKGLEGERPPRLPRGETDRDTYR. Positions 142-153 are enriched in low complexity; sequence AGAGAATEFQFR. Residues 154–165 show a composition bias toward gly residues; it reads GGFGRGRGQAPQ.

The protein belongs to the eukaryotic ribosomal protein eS10 family. Component of the small ribosomal subunit.

The protein resides in the cytoplasm. It is found in the nucleus. The protein localises to the nucleolus. Functionally, component of the 40S ribosomal subunit. The ribosome is a large ribonucleoprotein complex responsible for the synthesis of proteins in the cell. This chain is Small ribosomal subunit protein eS10 (rps10), found in Xenopus laevis (African clawed frog).